The primary structure comprises 943 residues: Translation initiation factor IF-2 (943 aa).

The interval 46-359 (IKGMLSKQSA…MPQRKERPLP (314 aa)) is disordered. The segment covering 57-76 (KAPSSQAAKTPAKAAKTSSA) has biased composition (low complexity). Basic and acidic residues-rich tracts occupy residues 92–103 (SNDHADVAEHSQ) and 110–124 (AKQE…KTSD). Residues 130-141 (SKSTILRPRSTQ) are compositionally biased toward polar residues. Over residues 142–190 (TAHTNTNHNRGGNTASANNTANGRNSNRSNNNNNNRSANNANRSGNNNR) the composition is skewed to low complexity. 3 stretches are compositionally biased toward basic and acidic residues: residues 191–205 (SNER…RFDN), 239–250 (ASERQQPKRQEA), and 259–271 (KRSE…RPRT). Low complexity-rich tracts occupy residues 289 to 299 (PAAAAPKPASA) and 315 to 330 (NFGR…GFNR). The span at 331–342 (NNRRNKKNKRRQ) shows a compositional bias: basic residues. Residues 346–358 (PKKEMPQRKERPL) are compositionally biased toward basic and acidic residues. A tr-type G domain is found at 444-613 (PRPPVVTIMG…LLEADVLELK (170 aa)). Residues 453-460 (GHVDHGKT) are G1. 453–460 (GHVDHGKT) is a binding site for GTP. The segment at 478–482 (GITQH) is G2. Positions 499 to 502 (DTPG) are G3. Residues 499–503 (DTPGH) and 553–556 (NKID) each bind GTP. The G4 stretch occupies residues 553-556 (NKID). The G5 stretch occupies residues 589 to 591 (SAK).

It belongs to the TRAFAC class translation factor GTPase superfamily. Classic translation factor GTPase family. IF-2 subfamily.

The protein localises to the cytoplasm. Functionally, one of the essential components for the initiation of protein synthesis. Protects formylmethionyl-tRNA from spontaneous hydrolysis and promotes its binding to the 30S ribosomal subunits. Also involved in the hydrolysis of GTP during the formation of the 70S ribosomal complex. In Lacticaseibacillus casei (strain BL23) (Lactobacillus casei), this protein is Translation initiation factor IF-2.